Here is a 374-residue protein sequence, read N- to C-terminus: S-adenosylmethionine:tRNA ribosyltransferase-isomerase (374 aa).

The protein belongs to the QueA family. Monomer.

It is found in the cytoplasm. The catalysed reaction is 7-aminomethyl-7-carbaguanosine(34) in tRNA + S-adenosyl-L-methionine = epoxyqueuosine(34) in tRNA + adenine + L-methionine + 2 H(+). The protein operates within tRNA modification; tRNA-queuosine biosynthesis. Transfers and isomerizes the ribose moiety from AdoMet to the 7-aminomethyl group of 7-deazaguanine (preQ1-tRNA) to give epoxyqueuosine (oQ-tRNA). This chain is S-adenosylmethionine:tRNA ribosyltransferase-isomerase, found in Prochlorococcus marinus (strain AS9601).